Consider the following 168-residue polypeptide: uncharacterized protein (168 aa).

Residues 1-10 (MSPTTGPQPN) are compositionally biased toward pro residues. Disordered regions lie at residues 1-23 (MSPTTGPQPNPRAWECHHTTGPQ) and 117-143 (EPGNVTVKRGPQPNPRAWECHRTRGPQ).

This is an uncharacterized protein from Homo sapiens (Human).